A 217-amino-acid chain; its full sequence is Elongation factor Ts (217 aa).

The segment at 82-85 (TDFV) is involved in Mg(2+) ion dislocation from EF-Tu.

It belongs to the EF-Ts family.

It is found in the cytoplasm. Associates with the EF-Tu.GDP complex and induces the exchange of GDP to GTP. It remains bound to the aminoacyl-tRNA.EF-Tu.GTP complex up to the GTP hydrolysis stage on the ribosome. This chain is Elongation factor Ts, found in Prochlorococcus marinus (strain SARG / CCMP1375 / SS120).